The following is a 180-amino-acid chain: Shikimate kinase (180 aa).

14 to 19 (GAGKST) is an ATP binding site. Serine 18 serves as a coordination point for Mg(2+). Substrate contacts are provided by aspartate 36, arginine 60, and glycine 82. Arginine 120 provides a ligand contact to ATP. Arginine 139 contacts substrate.

This sequence belongs to the shikimate kinase family. In terms of assembly, monomer. Mg(2+) is required as a cofactor.

The protein resides in the cytoplasm. The catalysed reaction is shikimate + ATP = 3-phosphoshikimate + ADP + H(+). It participates in metabolic intermediate biosynthesis; chorismate biosynthesis; chorismate from D-erythrose 4-phosphate and phosphoenolpyruvate: step 5/7. In terms of biological role, catalyzes the specific phosphorylation of the 3-hydroxyl group of shikimic acid using ATP as a cosubstrate. In Chromohalobacter salexigens (strain ATCC BAA-138 / DSM 3043 / CIP 106854 / NCIMB 13768 / 1H11), this protein is Shikimate kinase.